The chain runs to 269 residues: Glutamate racemase (269 aa).

Substrate is bound by residues 14-15 (DS) and 46-47 (YS). C78 serves as the catalytic Proton donor/acceptor. 79 to 80 (NT) contacts substrate. C189 (proton donor/acceptor) is an active-site residue. 190–191 (TH) is a binding site for substrate.

Belongs to the aspartate/glutamate racemases family.

The enzyme catalyses L-glutamate = D-glutamate. The protein operates within cell wall biogenesis; peptidoglycan biosynthesis. In terms of biological role, provides the (R)-glutamate required for cell wall biosynthesis. The chain is Glutamate racemase from Haemophilus influenzae (strain 86-028NP).